The chain runs to 40 residues: Large ribosomal subunit protein bL36 (40 aa).

This sequence belongs to the bacterial ribosomal protein bL36 family.

In Corynebacterium glutamicum (strain R), this protein is Large ribosomal subunit protein bL36.